A 341-amino-acid chain; its full sequence is tRNA N6-adenosine threonylcarbamoyltransferase (341 aa).

Histidine 115 and histidine 119 together coordinate Fe cation. Residues 137–141, aspartate 170, glycine 183, aspartate 187, and asparagine 276 each bind substrate; that span reads AVSGG. A Fe cation-binding site is contributed by aspartate 306.

This sequence belongs to the KAE1 / TsaD family. It depends on Fe(2+) as a cofactor.

It is found in the cytoplasm. It catalyses the reaction L-threonylcarbamoyladenylate + adenosine(37) in tRNA = N(6)-L-threonylcarbamoyladenosine(37) in tRNA + AMP + H(+). Functionally, required for the formation of a threonylcarbamoyl group on adenosine at position 37 (t(6)A37) in tRNAs that read codons beginning with adenine. Is involved in the transfer of the threonylcarbamoyl moiety of threonylcarbamoyl-AMP (TC-AMP) to the N6 group of A37, together with TsaE and TsaB. TsaD likely plays a direct catalytic role in this reaction. The protein is tRNA N6-adenosine threonylcarbamoyltransferase of Lacticaseibacillus casei (strain BL23) (Lactobacillus casei).